The chain runs to 41 residues: Large ribosomal subunit protein bL36 (41 aa).

Belongs to the bacterial ribosomal protein bL36 family.

This is Large ribosomal subunit protein bL36 from Ruegeria pomeroyi (strain ATCC 700808 / DSM 15171 / DSS-3) (Silicibacter pomeroyi).